A 282-amino-acid chain; its full sequence is Acyl-CoA-binding domain-containing protein 6 (282 aa).

The segment at 1–34 (MATPFLPAGATTGDSGGELSSGDDSGDLESFQTP) is disordered. Ser-41 bears the Phosphoserine mark. An ACB domain is found at 42–127 (LAELFEKAAA…VKKLDPGWNP (86 aa)). Residues 69-73 (YARYK) and Lys-95 each bind an acyl-CoA. Ser-106 is subject to Phosphoserine. Residue Tyr-114 participates in an acyl-CoA binding. 2 ANK repeats span residues 191–220 (EGRA…GINC) and 224–253 (EGQT…DPTL).

As to quaternary structure, monomer.

It is found in the cytoplasm. The protein localises to the nucleus. In terms of biological role, binds long-chain acyl-coenzyme A molecules with a strong preference for unsaturated C18:1-CoA, lower affinity for unsaturated C20:4-CoA, and very weak affinity for saturated C16:0-CoA. Does not bind fatty acids. Plays a role in protein N-myristoylation. This Rattus norvegicus (Rat) protein is Acyl-CoA-binding domain-containing protein 6 (Acbd6).